The chain runs to 518 residues: Zinc finger protein 449 (518 aa).

The SCAN box domain occupies 30-112 (RQRFRQFQYR…SLIEDLQREL (83 aa)). Residues 292-304 (NPTLGETPENSNL) are compositionally biased toward polar residues. The tract at residues 292 to 325 (NPTLGETPENSNLEEPLNPKPHKKKSPGEKPHRC) is disordered. C2H2-type zinc fingers lie at residues 323–345 (HRCPQCGKCFARKSQLTGHQRIH), 351–373 (HKCPECGKRFLRSSDLYRHQRLH), 379–401 (YECTVCKKRFTRRSHLIGHQRTH), 407–429 (YKCLECGKSFCHGSSLKRHLKTH), 435–457 (HRCHNCGKSFSRLTALTLHQRTH), 463–485 (FKCNYCGKSFRQRPSLVIHLRIH), and 491–513 (YKCTHCSKSFRQRAGLIMHQVTH).

This sequence belongs to the krueppel C2H2-type zinc-finger protein family.

The protein resides in the nucleus. Functionally, may be involved in transcriptional regulation. In Pan troglodytes (Chimpanzee), this protein is Zinc finger protein 449 (ZNF449).